The primary structure comprises 282 residues: 4-hydroxy-tetrahydrodipicolinate reductase (282 aa).

Residue 12–17 coordinates NAD(+); the sequence is GVTGRM. Arginine 44 contacts NADP(+). NAD(+)-binding positions include 107–109 and 131–134; these read GTT and SSNF. Histidine 164 functions as the Proton donor/acceptor in the catalytic mechanism. Residue histidine 165 coordinates (S)-2,3,4,5-tetrahydrodipicolinate. Lysine 168 serves as the catalytic Proton donor. Position 174-175 (174-175) interacts with (S)-2,3,4,5-tetrahydrodipicolinate; it reads GT.

Belongs to the DapB family. Homotetramer.

The protein resides in the cytoplasm. The enzyme catalyses (S)-2,3,4,5-tetrahydrodipicolinate + NAD(+) + H2O = (2S,4S)-4-hydroxy-2,3,4,5-tetrahydrodipicolinate + NADH + H(+). It carries out the reaction (S)-2,3,4,5-tetrahydrodipicolinate + NADP(+) + H2O = (2S,4S)-4-hydroxy-2,3,4,5-tetrahydrodipicolinate + NADPH + H(+). It participates in amino-acid biosynthesis; L-lysine biosynthesis via DAP pathway; (S)-tetrahydrodipicolinate from L-aspartate: step 4/4. In terms of biological role, catalyzes the conversion of 4-hydroxy-tetrahydrodipicolinate (HTPA) to tetrahydrodipicolinate. This Blochmanniella pennsylvanica (strain BPEN) protein is 4-hydroxy-tetrahydrodipicolinate reductase.